Reading from the N-terminus, the 426-residue chain is Serine--tRNA ligase (426 aa).

Residue 232–234 participates in L-serine binding; the sequence is TAE. Residue 263-265 participates in ATP binding; it reads RRE. E286 lines the L-serine pocket. 350–353 provides a ligand contact to ATP; it reads EISS. S385 serves as a coordination point for L-serine.

This sequence belongs to the class-II aminoacyl-tRNA synthetase family. Type-1 seryl-tRNA synthetase subfamily. In terms of assembly, homodimer. The tRNA molecule binds across the dimer.

It localises to the cytoplasm. The catalysed reaction is tRNA(Ser) + L-serine + ATP = L-seryl-tRNA(Ser) + AMP + diphosphate + H(+). The enzyme catalyses tRNA(Sec) + L-serine + ATP = L-seryl-tRNA(Sec) + AMP + diphosphate + H(+). It participates in aminoacyl-tRNA biosynthesis; selenocysteinyl-tRNA(Sec) biosynthesis; L-seryl-tRNA(Sec) from L-serine and tRNA(Sec): step 1/1. Catalyzes the attachment of serine to tRNA(Ser). Is also able to aminoacylate tRNA(Sec) with serine, to form the misacylated tRNA L-seryl-tRNA(Sec), which will be further converted into selenocysteinyl-tRNA(Sec). This Fervidobacterium nodosum (strain ATCC 35602 / DSM 5306 / Rt17-B1) protein is Serine--tRNA ligase.